Reading from the N-terminus, the 341-residue chain is Holliday junction branch migration complex subunit RuvB (341 aa).

The tract at residues 1 to 182 is large ATPase domain (RuvB-L); that stretch reads MTERFVTPDF…FGVICRLEFY (182 aa). Residues Leu21, Arg22, Gly63, Lys66, Thr67, Thr68, 129 to 131, Arg172, Tyr182, and Arg219 each bind ATP; that span reads EDY. Thr67 serves as a coordination point for Mg(2+). Residues 183-253 form a small ATPAse domain (RuvB-S) region; the sequence is TDDELATIAG…IADMALSRLE (71 aa). The segment at 256–341 is head domain (RuvB-H); that stretch reads NCGLDHMDRL…RGKTSGELFS (86 aa). DNA-binding residues include Arg311 and Arg316.

The protein belongs to the RuvB family. Homohexamer. Forms an RuvA(8)-RuvB(12)-Holliday junction (HJ) complex. HJ DNA is sandwiched between 2 RuvA tetramers; dsDNA enters through RuvA and exits via RuvB. An RuvB hexamer assembles on each DNA strand where it exits the tetramer. Each RuvB hexamer is contacted by two RuvA subunits (via domain III) on 2 adjacent RuvB subunits; this complex drives branch migration. In the full resolvosome a probable DNA-RuvA(4)-RuvB(12)-RuvC(2) complex forms which resolves the HJ.

The protein localises to the cytoplasm. It carries out the reaction ATP + H2O = ADP + phosphate + H(+). Functionally, the RuvA-RuvB-RuvC complex processes Holliday junction (HJ) DNA during genetic recombination and DNA repair, while the RuvA-RuvB complex plays an important role in the rescue of blocked DNA replication forks via replication fork reversal (RFR). RuvA specifically binds to HJ cruciform DNA, conferring on it an open structure. The RuvB hexamer acts as an ATP-dependent pump, pulling dsDNA into and through the RuvAB complex. RuvB forms 2 homohexamers on either side of HJ DNA bound by 1 or 2 RuvA tetramers; 4 subunits per hexamer contact DNA at a time. Coordinated motions by a converter formed by DNA-disengaged RuvB subunits stimulates ATP hydrolysis and nucleotide exchange. Immobilization of the converter enables RuvB to convert the ATP-contained energy into a lever motion, pulling 2 nucleotides of DNA out of the RuvA tetramer per ATP hydrolyzed, thus driving DNA branch migration. The RuvB motors rotate together with the DNA substrate, which together with the progressing nucleotide cycle form the mechanistic basis for DNA recombination by continuous HJ branch migration. Branch migration allows RuvC to scan DNA until it finds its consensus sequence, where it cleaves and resolves cruciform DNA. The chain is Holliday junction branch migration complex subunit RuvB from Syntrophotalea carbinolica (strain DSM 2380 / NBRC 103641 / GraBd1) (Pelobacter carbinolicus).